The following is a 228-amino-acid chain: MATSLTWHDVLAQEKQQPYFINTLEFVGKERAAGKTIYPPQKDVFNAFRFTELHQVKVVILGQDPYHGPNQAHGLSFSVRPGVPAPPSLANIYKELASDIPGFEIPRHGFLQSWAEQGVLLLNTVLTVEAGQAHSHANLGWETFTDRVIAALNEQREGLVFLLWGSHAQKKGNIIDQRRHHILKSPHPSPLSAHRGFLGCKHFSQANQLLEQQGLSPIDWTPRLPEEA.

The Proton acceptor role is filled by aspartate 64.

The protein belongs to the uracil-DNA glycosylase (UDG) superfamily. UNG family.

The protein localises to the cytoplasm. The catalysed reaction is Hydrolyzes single-stranded DNA or mismatched double-stranded DNA and polynucleotides, releasing free uracil.. Functionally, excises uracil residues from the DNA which can arise as a result of misincorporation of dUMP residues by DNA polymerase or due to deamination of cytosine. This chain is Uracil-DNA glycosylase, found in Pectobacterium carotovorum subsp. carotovorum (strain PC1).